Here is a 373-residue protein sequence, read N- to C-terminus: Queuine tRNA-ribosyltransferase (373 aa).

Aspartate 90 serves as the catalytic Proton acceptor. Substrate contacts are provided by residues 90–94, aspartate 144, glutamine 193, and glycine 220; that span reads DSGGF. The interval 251–257 is RNA binding; that stretch reads GVGTPED. The active-site Nucleophile is aspartate 270. The interval 275–279 is RNA binding; important for wobble base 34 recognition; sequence TRNAR. Zn(2+) is bound by residues cysteine 308, cysteine 310, cysteine 313, and histidine 339.

It belongs to the queuine tRNA-ribosyltransferase family. In terms of assembly, homodimer. Within each dimer, one monomer is responsible for RNA recognition and catalysis, while the other monomer binds to the replacement base PreQ1. Zn(2+) is required as a cofactor.

It carries out the reaction 7-aminomethyl-7-carbaguanine + guanosine(34) in tRNA = 7-aminomethyl-7-carbaguanosine(34) in tRNA + guanine. It functions in the pathway tRNA modification; tRNA-queuosine biosynthesis. Functionally, catalyzes the base-exchange of a guanine (G) residue with the queuine precursor 7-aminomethyl-7-deazaguanine (PreQ1) at position 34 (anticodon wobble position) in tRNAs with GU(N) anticodons (tRNA-Asp, -Asn, -His and -Tyr). Catalysis occurs through a double-displacement mechanism. The nucleophile active site attacks the C1' of nucleotide 34 to detach the guanine base from the RNA, forming a covalent enzyme-RNA intermediate. The proton acceptor active site deprotonates the incoming PreQ1, allowing a nucleophilic attack on the C1' of the ribose to form the product. After dissociation, two additional enzymatic reactions on the tRNA convert PreQ1 to queuine (Q), resulting in the hypermodified nucleoside queuosine (7-(((4,5-cis-dihydroxy-2-cyclopenten-1-yl)amino)methyl)-7-deazaguanosine). This Campylobacter jejuni subsp. doylei (strain ATCC BAA-1458 / RM4099 / 269.97) protein is Queuine tRNA-ribosyltransferase.